The chain runs to 114 residues: Putative cysteine proteinase inhibitor 9 (114 aa).

Positions M1–A23 are cleaved as a signal peptide.

Belongs to the cystatin family. Phytocystatin subfamily.

Its subcellular location is the secreted. Functionally, specific inhibitor of cysteine proteinases. Probably involved in the regulation of endogenous processes and in defense against pests and pathogens. The sequence is that of Putative cysteine proteinase inhibitor 9 from Oryza sativa subsp. japonica (Rice).